Reading from the N-terminus, the 625-residue chain is DNA mismatch repair protein MutL (625 aa).

It belongs to the DNA mismatch repair MutL/HexB family.

This protein is involved in the repair of mismatches in DNA. It is required for dam-dependent methyl-directed DNA mismatch repair. May act as a 'molecular matchmaker', a protein that promotes the formation of a stable complex between two or more DNA-binding proteins in an ATP-dependent manner without itself being part of a final effector complex. This Xanthomonas axonopodis pv. citri (strain 306) protein is DNA mismatch repair protein MutL.